We begin with the raw amino-acid sequence, 70 residues long: uncharacterized protein (70 aa).

Residues 5-59 (IREFRAKYGMTQEELAKKVGVRRETIVFLEKGKYNPSLRLAYKIARVFNARIEDL) form the HTH cro/C1-type domain. Residues 16–35 (QEELAKKVGVRRETIVFLEK) constitute a DNA-binding region (H-T-H motif).

This is an uncharacterized protein from Archaeoglobus fulgidus (strain ATCC 49558 / DSM 4304 / JCM 9628 / NBRC 100126 / VC-16).